A 274-amino-acid chain; its full sequence is Diaminopimelate epimerase (274 aa).

3 residues coordinate substrate: asparagine 11, glutamine 44, and asparagine 64. Cysteine 73 (proton donor) is an active-site residue. Substrate is bound by residues 74–75 (GN), asparagine 157, asparagine 190, and 208–209 (ER). Residue cysteine 217 is the Proton acceptor of the active site. 218–219 (GS) contributes to the substrate binding site.

Belongs to the diaminopimelate epimerase family. In terms of assembly, homodimer (Potential). Previously DapF has been proposed to be a monomer, however it seems that it adopts a dimeric structure.

The protein resides in the cytoplasm. The catalysed reaction is (2S,6S)-2,6-diaminopimelate = meso-2,6-diaminopimelate. It participates in amino-acid biosynthesis; L-lysine biosynthesis via DAP pathway; DL-2,6-diaminopimelate from LL-2,6-diaminopimelate: step 1/1. With respect to regulation, inhibited by LL-aziridino (LL-AziDAP), DL-aziridino (DL-AziDAP). Also inhibited by (2S,3R,6S)-2,6-diamino-3-fluoropimelate (L,L-3-fluoro-DAP) and (2R,3S,6S)-2,6-diamino-3-fluoropimelate (D,L-3-fluoro-DAP). Functionally, catalyzes the stereoinversion of LL-2,6-diaminopimelate (L,L-DAP) to meso-diaminopimelate (meso-DAP), a precursor of L-lysine and an essential component of the bacterial peptidoglycan. Only accepts DAP isomers with the L configuration. The chain is Diaminopimelate epimerase from Haemophilus influenzae (strain ATCC 51907 / DSM 11121 / KW20 / Rd).